Here is a 225-residue protein sequence, read N- to C-terminus: Protein ERP3 (225 aa).

The first 23 residues, 1–23 (MSNLCVLFFQFFFLAQFFAEASP), serve as a signal peptide directing secretion. Residues 24–195 (LTFELNKGRK…STEHRIVMFS (172 aa)) lie on the Lumenal side of the membrane. One can recognise a GOLD domain in the interval 33–172 (KECLYTLTPE…LHVLERNIQY (140 aa)). Residues 129-138 (ERRKARKAQR) are compositionally biased toward basic residues. Residues 129 to 149 (ERRKARKAQRNLRDSKTDPLQ) form a disordered region. Residues 196–216 (IYGILLIIGMSCAQIAILEFI) form a helical membrane-spanning segment. Residues 217–225 (FRESRKHNV) are Cytoplasmic-facing.

This sequence belongs to the EMP24/GP25L family.

The protein resides in the endoplasmic reticulum membrane. In terms of biological role, involved in vesicular protein trafficking. This Saccharomyces cerevisiae (strain ATCC 204508 / S288c) (Baker's yeast) protein is Protein ERP3 (ERP3).